The primary structure comprises 2134 residues: Tudor domain-containing protein 6 (2134 aa).

The interval 287-315 (RAPVGTDDEDSGSATWEEREESPDKPGSP) is disordered. Thr292 is subject to Phosphothreonine. 4 Tudor domains span residues 309-368 (PDKP…YFRM), 542-599 (RPEP…FRQL), 820-879 (YEGD…FFQV), and 1038-1092 (TLAP…AHDV). The segment at 1271–1296 (SPMSGTKLDSALPERRMGEPSGRDLP) is disordered. Residues 1282-1296 (LPERRMGEPSGRDLP) show a composition bias toward basic and acidic residues. 2 Tudor domains span residues 1358–1417 (QWQS…DAVL) and 1570–1630 (CPQI…LLLV). 2 disordered regions span residues 1699-1733 (KKYA…GLKK) and 1860-1885 (LQHS…LSPG). Over residues 1711 to 1722 (LSSEKRGPERKG) the composition is skewed to basic and acidic residues. Phosphoserine is present on residues Ser1723 and Ser1726. Ser1925 carries the phosphoserine modification. The segment covering 1930–1939 (AVSQDIQGSR) has biased composition (polar residues). Residues 1930 to 1985 (AVSQDIQGSRCSEDERKAGYMGSSDDDHSRSPLLQHGKGGNSPAHDGRNLSEEEFP) are disordered. Phosphoserine is present on residues Ser1980, Ser2063, and Ser2115.

Found in a mRNP complex (i.e. messenger ribonucleoproteins which correspond to mRNA with bound proteins), at least composed of TDRD1, TDRD6, TDRD7 and DDX4. Found in a complex, at least composed of PIWIL1, PIWIL2, DDX4 and TDRD6. Interacts with Tex19.1 and probably Tex19.2. Interacts with PRMT5. Interacts with SNRPB (when methylated); to trigger spliceosome formation. Undergoes proteolytic cleavage near the C-terminal by an unknown protease during the transition from meiosis I to meiosis II in primary spermatocytes. Testis specific. Expressed in primary spermatocytes at post natal (PN) day 17.5. Expressed in midpachytene stage of primary spermatocytes at PN16 and in round spermatids at PN22 (at protein level).

It is found in the cytoplasm. In terms of biological role, tudor domain-containing protein involved in germ cell development, more specifically the formation of chromatoid body (during spermiogenesis), Balbiani body (during oogenesis), germ plasm (upon fertilization), and for proper miRNA expression and spliceosome maturation. Essential for RNA-dependent helicase UPF1 localization to chromatoid body, for UPF1-UPF2 and UPF1-DDX4 interactions which are required for mRNA degradation, using the extended 3' UTR-triggered nonsense-mediated mRNA decay (NMD) pathway. Involved in spliceosome maturation and mRNA splicing in prophase I spermatocytes through interaction with arginine N-methyltransferase PRMT5 and symmetrically arginine dimethylated SNRPB (small nuclear ribonucleoprotein-associated protein). This Mus musculus (Mouse) protein is Tudor domain-containing protein 6.